The following is a 115-amino-acid chain: Large ribosomal subunit protein eL30 (115 aa).

Ser10 and Ser16 each carry phosphoserine. Lys26 is subject to N6-acetyllysine; alternate. Residue Lys26 forms a Glycyl lysine isopeptide (Lys-Gly) (interchain with G-Cter in SUMO2); alternate linkage.

The protein belongs to the eukaryotic ribosomal protein eL30 family. In terms of assembly, component of the large ribosomal subunit.

It is found in the cytoplasm. Its function is as follows. Component of the large ribosomal subunit. The ribosome is a large ribonucleoprotein complex responsible for the synthesis of proteins in the cell. The sequence is that of Large ribosomal subunit protein eL30 (RPL30) from Oryctolagus cuniculus (Rabbit).